A 227-amino-acid chain; its full sequence is ATP synthase F(0) complex subunit a (227 aa).

Transmembrane regions (helical) follow at residues 13–33 (YLLGIPLILVAMLLPWLLFPA), 69–89 (WALLFASLMVFLITINLLGLL), 98–118 (QLSLNMGFAVPLWLATVIIGM), 132–152 (EGTPIPLIPALIIIETISLFI), 179–199 (VFVLLPMMPAVAILTASVLFL), and 202–222 (LLEVAVAMIQAYVFILLLSLY).

The protein belongs to the ATPase A chain family. Component of the ATP synthase complex composed at least of ATP5F1A/subunit alpha, ATP5F1B/subunit beta, ATP5MC1/subunit c (homooctomer), MT-ATP6/subunit a, MT-ATP8/subunit 8, ATP5ME/subunit e, ATP5MF/subunit f, ATP5MG/subunit g, ATP5MK/subunit k, ATP5MJ/subunit j, ATP5F1C/subunit gamma, ATP5F1D/subunit delta, ATP5F1E/subunit epsilon, ATP5PF/subunit F6, ATP5PB/subunit b, ATP5PD/subunit d, ATP5PO/subunit OSCP. ATP synthase complex consists of a soluble F(1) head domain (subunits alpha(3) and beta(3)) - the catalytic core - and a membrane F(0) domain - the membrane proton channel (subunits c, a, 8, e, f, g, k and j). These two domains are linked by a central stalk (subunits gamma, delta, and epsilon) rotating inside the F1 region and a stationary peripheral stalk (subunits F6, b, d, and OSCP). Interacts with DNAJC30; interaction is direct.

It is found in the mitochondrion inner membrane. The enzyme catalyses H(+)(in) = H(+)(out). Functionally, subunit a, of the mitochondrial membrane ATP synthase complex (F(1)F(0) ATP synthase or Complex V) that produces ATP from ADP in the presence of a proton gradient across the membrane which is generated by electron transport complexes of the respiratory chain. ATP synthase complex consist of a soluble F(1) head domain - the catalytic core - and a membrane F(1) domain - the membrane proton channel. These two domains are linked by a central stalk rotating inside the F(1) region and a stationary peripheral stalk. During catalysis, ATP synthesis in the catalytic domain of F(1) is coupled via a rotary mechanism of the central stalk subunits to proton translocation. With the subunit c (ATP5MC1), forms the proton-conducting channel in the F(0) domain, that contains two crucial half-channels (inlet and outlet) that facilitate proton movement from the mitochondrial intermembrane space (IMS) into the matrix. Protons are taken up via the inlet half-channel and released through the outlet half-channel, following a Grotthuss mechanism. The polypeptide is ATP synthase F(0) complex subunit a (Danio rerio (Zebrafish)).